A 261-amino-acid polypeptide reads, in one-letter code: Putative hydro-lyase SAR11_0660 (261 aa).

This sequence belongs to the D-glutamate cyclase family.

The polypeptide is Putative hydro-lyase SAR11_0660 (Pelagibacter ubique (strain HTCC1062)).